Consider the following 154-residue polypeptide: CASP-like protein 5B2 (154 aa).

The Cytoplasmic segment spans residues 1 to 10; the sequence is MKKLLGGPGT. A helical transmembrane segment spans residues 11-31; it reads VCGLLLRIGQCASAAASIGVM. At 32–42 the chain is on the extracellular side; that stretch reads VSAKEFSVHTA. Residues 43–63 traverse the membrane as a helical segment; the sequence is FCYLIASMGLQLLWSFGLACL. Topologically, residues 64 to 77 are cytoplasmic; that stretch reads DVYALRGKKDLQNP. The chain crosses the membrane as a helical span at residues 78-98; that stretch reads ILVSLFVVGDWVTAMLSLAAA. Over 99-129 the chain is Extracellular; sequence CSSAGVVVLYEKDIKYCNTQSQYPCLRYEVA. Residues 130–150 form a helical membrane-spanning segment; that stretch reads VALSFVTWIQIAVSSHVTFWI. The Cytoplasmic portion of the chain corresponds to 151 to 154; the sequence is LASV.

The protein belongs to the Casparian strip membrane proteins (CASP) family. Homodimer and heterodimers. In terms of tissue distribution, expressed in the stele of the root.

The protein resides in the cell membrane. In Arabidopsis thaliana (Mouse-ear cress), this protein is CASP-like protein 5B2.